A 282-amino-acid chain; its full sequence is MARRVSTTRLLLLLLLVAAAAAAAAAGDQEDPRGGGDNGTARLDRRTKMFLHAARASDGGATGMEKAGLGLFDAFFASLSMILVSEIGDETFIIAALMAMRHPKSTVLSGALSALVVMTILSTGLGRIVPNLISRKHTNSAATVLYAFFGLRLLYIAWRSDSKASQKKEIEEVEEKLEAGQGKSTFRRIFSRFCTPIFLESFVLTFLAEWGDRSQIATIALATHKNAVGVAVGATLGHTICTSFAVVGGSMLASKISQGTVATIGGLLFLGFSLSSYFYPPL.

The signal sequence occupies residues 1–26; the sequence is MARRVSTTRLLLLLLLVAAAAAAAAA. The next 6 membrane-spanning stretches (helical) occupy residues 67–87, 106–126, 138–158, 189–209, 227–247, and 259–279; these read AGLG…VSEI, TVLS…TGLG, TNSA…YIAW, IFSR…FLAE, AVGV…FAVV, and GTVA…SYFY.

The protein belongs to the GDT1 family.

Its subcellular location is the membrane. In Oryza sativa subsp. japonica (Rice), this protein is GDT1-like protein 4.